The chain runs to 708 residues: Ion-translocating oxidoreductase complex subunit C (708 aa).

4Fe-4S ferredoxin-type domains lie at 369-397 and 407-436; these read GEPQ…QQLY and KATT…VQYF. C377, C380, C383, C387, C416, C419, C422, and C426 together coordinate [4Fe-4S] cluster. The tract at residues 630–682 is disordered; it reads AKARKLEQQQANAEPEEQIDPRKAAVEAAIARAKARKLEQQQANAEPEEQIDP.

This sequence belongs to the 4Fe4S bacterial-type ferredoxin family. RnfC subfamily. The complex is composed of six subunits: RsxA, RsxB, RsxC, RsxD, RsxE and RsxG. The cofactor is [4Fe-4S] cluster.

The protein localises to the cell inner membrane. Its function is as follows. Part of a membrane-bound complex that couples electron transfer with translocation of ions across the membrane. Required to maintain the reduced state of SoxR. This chain is Ion-translocating oxidoreductase complex subunit C, found in Escherichia coli (strain UTI89 / UPEC).